The chain runs to 629 residues: Coiled-coil domain-containing protein 120 (629 aa).

The segment at 31-70 (RLRGLLDRQRALQEALSVKLQELRKVCLQEAELTGQLPPE) is involved in CYTH2-binding. Positions 109–173 (ELALEALERE…LRDFRARLGL (65 aa)) form a coiled coil. Composition is skewed to low complexity over residues 209-219 (HSESSSLSESG) and 279-294 (ASPT…SASS). Positions 209–356 (HSESSSLSES…LFAARTRRSN (148 aa)) are disordered. Residues 323 to 332 (RQWSGSQDSQ) are compositionally biased toward polar residues. Ser-355 and Ser-357 each carry phosphoserine. Disordered stretches follow at residues 399 to 432 (QPVP…GAPR) and 602 to 629 (PSQA…FTDG). The segment covering 418-432 (ARPSSAAPASRGAPR) has biased composition (low complexity). Arg-432 carries the omega-N-methylarginine modification.

As to quaternary structure, interacts with NIN and CEP170; leading to recruit them to centrosomes. Interacts with CYTH2; this interaction is direct and stabilizes CCDC120, possibly by preventing ubiquitination. In terms of processing, ubiquitinated; interaction with CYTH2 may prevent ubiquitination.

The protein localises to the cytoplasm. It is found in the cytoskeleton. Its subcellular location is the microtubule organizing center. The protein resides in the centrosome. It localises to the centriole. The protein localises to the cell projection. It is found in the neuron projection. Its subcellular location is the growth cone. The protein resides in the endosome. Functionally, centriolar protein required for centriole subdistal appendage assembly and microtubule anchoring in interphase cells. Together with CCDC68, cooperate with subdistal appendage components ODF2, NIN and CEP170 for hierarchical subdistal appendage assembly. Recruits NIN and CEP170 to centrosomes. Also required for neurite growth. Localizes CYTH2 to vesicles to allow its transport along neurites, and subsequent ARF6 activation and neurite growth. The sequence is that of Coiled-coil domain-containing protein 120 from Mus musculus (Mouse).